The sequence spans 374 residues: N-acetyldiaminopimelate deacetylase (374 aa).

Residue Asp-69 is part of the active site. Glu-128 acts as the Proton acceptor in catalysis.

This sequence belongs to the peptidase M20A family. N-acetyldiaminopimelate deacetylase subfamily.

It catalyses the reaction N-acetyl-(2S,6S)-2,6-diaminopimelate + H2O = (2S,6S)-2,6-diaminopimelate + acetate. The protein operates within amino-acid biosynthesis; L-lysine biosynthesis via DAP pathway; LL-2,6-diaminopimelate from (S)-tetrahydrodipicolinate (acetylase route): step 3/3. Its function is as follows. Catalyzes the conversion of N-acetyl-diaminopimelate to diaminopimelate and acetate. The polypeptide is N-acetyldiaminopimelate deacetylase (ykuR) (Bacillus subtilis (strain 168)).